The following is a 166-amino-acid chain: NADH-quinone oxidoreductase subunit A (166 aa).

3 helical membrane-spanning segments follow: residues 16 to 36 (FAVFLIGAVGLCGLMLLGAYF), 68 to 88 (FYLVAMFFVIFDVEALYLYAW), and 98 to 118 (IGFIEAAIFILVLLAGLFYLV). Residues 141 to 166 (RYASSHPQDISQELSVAGSQQANESR) form a disordered region.

Belongs to the complex I subunit 3 family. NDH-1 is composed of 13 different subunits. Subunits NuoA, H, J, K, L, M, N constitute the membrane sector of the complex.

Its subcellular location is the cell inner membrane. It carries out the reaction a quinone + NADH + 5 H(+)(in) = a quinol + NAD(+) + 4 H(+)(out). NDH-1 shuttles electrons from NADH, via FMN and iron-sulfur (Fe-S) centers, to quinones in the respiratory chain. The immediate electron acceptor for the enzyme in this species is believed to be ubiquinone. Couples the redox reaction to proton translocation (for every two electrons transferred, four hydrogen ions are translocated across the cytoplasmic membrane), and thus conserves the redox energy in a proton gradient. The chain is NADH-quinone oxidoreductase subunit A from Yersinia pseudotuberculosis serotype O:1b (strain IP 31758).